The following is a 1812-amino-acid chain: Putative surface cell antigen sca2 (1812 aa).

The N-terminal stretch at 1–17 (MSTCLLTSSFLSTSARA) is a signal peptide. 2 stretches are compositionally biased toward polar residues: residues 344–357 (FLNN…STGR) and 371–382 (MSNQSIHNTGTS). 3 disordered regions span residues 344-382 (FLNN…TGTS), 648-691 (LEQT…QGFS), and 1338-1462 (KQEN…KKDV). Positions 656 to 685 (PNPPPLPLNGGIPNPPPLPLNGSMPPPPPL) are enriched in pro residues. Basic and acidic residues-rich tracts occupy residues 1349-1367 (STKD…EQSD) and 1382-1393 (SKNDKSSDDKKS). Acidic residues predominate over residues 1401–1416 (DEDDTGYATDEEELEE). Residues 1417 to 1455 (SNSTTNEELEESNSTTNEELEESNSTTNEELEESNSTTN) show a composition bias toward low complexity. Positions 1533–1812 (ETSINRGVWI…QGLIKLKVNL (280 aa)) constitute an Autotransporter domain.

The protein localises to the cell outer membrane. The polypeptide is Putative surface cell antigen sca2 (sca2) (Rickettsia sibirica (strain ATCC VR-151 / 246)).